Here is a 303-residue protein sequence, read N- to C-terminus: ATP synthase subunit a (303 aa).

Helical transmembrane passes span 59–79, 122–142, 148–168, 181–201, 220–240, and 244–264; these read HTVM…IWGN, FLLT…VPWM, NLAV…VAGI, TGGV…LGLF, IVYF…VAAV, and FAFA…YVFA. The segment covering 281–290 has biased composition (basic and acidic residues); that stretch reads HDDHGHDHPE. A disordered region spans residues 281–303; it reads HDDHGHDHPEAGPSHDQGKAHHA.

Belongs to the ATPase A chain family. In terms of assembly, F-type ATPases have 2 components, CF(1) - the catalytic core - and CF(0) - the membrane proton channel. CF(1) has five subunits: alpha(3), beta(3), gamma(1), delta(1), epsilon(1). CF(0) has three main subunits: a(1), b(2) and c(9-12). The alpha and beta chains form an alternating ring which encloses part of the gamma chain. CF(1) is attached to CF(0) by a central stalk formed by the gamma and epsilon chains, while a peripheral stalk is formed by the delta and b chains.

It localises to the cell inner membrane. Its function is as follows. Key component of the proton channel; it plays a direct role in the translocation of protons across the membrane. The protein is ATP synthase subunit a of Myxococcus xanthus (strain DK1622).